A 618-amino-acid chain; its full sequence is 1-deoxy-D-xylulose-5-phosphate synthase (618 aa).

Thiamine diphosphate is bound by residues His-73 and 114 to 116; that span reads GHS. Asp-145 contributes to the Mg(2+) binding site. Thiamine diphosphate-binding positions include 146–147, Asn-174, Tyr-284, and Glu-364; that span reads GA. Mg(2+) is bound at residue Asn-174.

The protein belongs to the transketolase family. DXPS subfamily. In terms of assembly, homodimer. Mg(2+) is required as a cofactor. Thiamine diphosphate serves as cofactor.

It catalyses the reaction D-glyceraldehyde 3-phosphate + pyruvate + H(+) = 1-deoxy-D-xylulose 5-phosphate + CO2. Its pathway is metabolic intermediate biosynthesis; 1-deoxy-D-xylulose 5-phosphate biosynthesis; 1-deoxy-D-xylulose 5-phosphate from D-glyceraldehyde 3-phosphate and pyruvate: step 1/1. Catalyzes the acyloin condensation reaction between C atoms 2 and 3 of pyruvate and glyceraldehyde 3-phosphate to yield 1-deoxy-D-xylulose-5-phosphate (DXP). The chain is 1-deoxy-D-xylulose-5-phosphate synthase from Clostridium beijerinckii (strain ATCC 51743 / NCIMB 8052) (Clostridium acetobutylicum).